The primary structure comprises 271 residues: 3-methyl-2-oxobutanoate hydroxymethyltransferase (271 aa).

Mg(2+) contacts are provided by Asp-51 and Asp-90. Residues 51–52 (DS), Asp-90, and Lys-119 contribute to the 3-methyl-2-oxobutanoate site. Glu-121 lines the Mg(2+) pocket. Glu-188 acts as the Proton acceptor in catalysis.

Belongs to the PanB family. In terms of assembly, homodecamer; pentamer of dimers. Mg(2+) serves as cofactor.

Its subcellular location is the cytoplasm. The catalysed reaction is 3-methyl-2-oxobutanoate + (6R)-5,10-methylene-5,6,7,8-tetrahydrofolate + H2O = 2-dehydropantoate + (6S)-5,6,7,8-tetrahydrofolate. The protein operates within cofactor biosynthesis; (R)-pantothenate biosynthesis; (R)-pantoate from 3-methyl-2-oxobutanoate: step 1/2. Catalyzes the reversible reaction in which hydroxymethyl group from 5,10-methylenetetrahydrofolate is transferred onto alpha-ketoisovalerate to form ketopantoate. This is 3-methyl-2-oxobutanoate hydroxymethyltransferase from Azoarcus sp. (strain BH72).